We begin with the raw amino-acid sequence, 352 residues long: C-C chemokine receptor type 5 (352 aa).

The Extracellular portion of the chain corresponds to 1–30; it reads MDYQVSSPTYDIDYYTSGPCQKINVKQIAA. Y3 is subject to Sulfotyrosine. S6 and S7 each carry an O-linked (GalNAc...) serine glycan. Y10, Y14, and Y15 each carry sulfotyrosine. Intrachain disulfides connect C20-C269 and C101-C178. Residues 31–58 traverse the membrane as a helical segment; the sequence is RLLPPLYSLVFIFGFVGNMLVILILINC. At 59–68 the chain is on the cytoplasmic side; sequence KRLKSMTDIY. A helical membrane pass occupies residues 69–89; it reads LLNLAISDLFFLLTVPFWAHY. Residues 90 to 102 lie on the Extracellular side of the membrane; it reads AAAQWDFGNTMCQ. The chain crosses the membrane as a helical span at residues 103–124; it reads LLTGLYFIGFFSGIFFIILLTI. Topologically, residues 125 to 141 are cytoplasmic; the sequence is DRYLAIVHAVFALKART. The chain crosses the membrane as a helical span at residues 142-166; it reads VTFGVVTSVITWVVAVFASLPGIIF. At 167–198 the chain is on the extracellular side; sequence TRSQKEGLHYTCSSHFPYSQYQFWKNFQTLKI. A helical transmembrane segment spans residues 199–218; that stretch reads VILGLVLPLLVMVICYSGIL. Residues 219 to 235 are Cytoplasmic-facing; that stretch reads KTLLRCRNEKKRHRAVR. The chain crosses the membrane as a helical span at residues 236 to 260; sequence LIFTIMIVYFLFWAPYNIVLLLNTF. At 261–277 the chain is on the extracellular side; that stretch reads QEFFGLNNCSSSNRLDQ. A helical transmembrane segment spans residues 278-301; the sequence is AMQVTETLGMTHCCINPIIYAFVG. The Cytoplasmic portion of the chain corresponds to 302 to 352; the sequence is EKFRNYLLVFFQKHIAKHFCKCCSIFQQEAPERASSVYTRSTGEQEISVGL. 3 S-palmitoyl cysteine lipidation sites follow: C321, C323, and C324. S336, S337, S342, and S349 each carry phosphoserine; by BARK1.

Belongs to the G-protein coupled receptor 1 family. Interacts with PRAF2. Efficient ligand binding to CCL3/MIP-1alpha and CCL4/MIP-1beta requires sulfation, O-glycosylation and sialic acid modifications. Glycosylation on Ser-6 is required for efficient binding of CCL4. Interacts with GRK2. Interacts with ARRB1 and ARRB2. Interacts with CNIH4. Interacts with S100A4; this interaction stimulates T-lymphocyte chemotaxis. Post-translationally, sulfated on at least 2 of the N-terminal tyrosines. Sulfation is required for efficient binding of the chemokines, CCL3 and CCL4. Palmitoylation in the C-terminal is important for cell surface expression. In terms of processing, phosphorylation on serine residues in the C-terminal is stimulated by binding CC chemokines especially by APO-RANTES. Post-translationally, O-glycosylated, but not N-glycosylated. Ser-6 appears to be the major site even if Ser-7 may be also O-glycosylated. Also sialylated glycans present which contribute to chemokine binding. Thr-16 and Ser-17 may also be glycosylated and, if so, with small moieties such as a T-antigen.

The protein resides in the cell membrane. In terms of biological role, receptor for a number of inflammatory CC-chemokines including CCL3/MIP-1-alpha, CCL4/MIP-1-beta and RANTES and subsequently transduces a signal by increasing the intracellular calcium ion level. May play a role in the control of granulocytic lineage proliferation or differentiation. Participates in T-lymphocyte migration to the infection site by acting as a chemotactic receptor. This Hylobates moloch (Silvery gibbon) protein is C-C chemokine receptor type 5 (CCR5).